The chain runs to 63 residues: Large ribosomal subunit protein bL35 (63 aa).

This sequence belongs to the bacterial ribosomal protein bL35 family.

The chain is Large ribosomal subunit protein bL35 from Campylobacter jejuni subsp. doylei (strain ATCC BAA-1458 / RM4099 / 269.97).